Consider the following 213-residue polypeptide: ATP synthase subunit b 2 (213 aa).

Residues 1 to 45 (MFVTEAYAQSAPTVGETHTETPAVGQPQPEATHTETGVAHGAEHG) are disordered. The helical transmembrane segment at 57-76 (TYASQVLWLAITFGLFYLLM) threads the bilayer.

The protein belongs to the ATPase B chain family. As to quaternary structure, F-type ATPases have 2 components, F(1) - the catalytic core - and F(0) - the membrane proton channel. F(1) has five subunits: alpha(3), beta(3), gamma(1), delta(1), epsilon(1). F(0) has three main subunits: a(1), b(2) and c(10-14). The alpha and beta chains form an alternating ring which encloses part of the gamma chain. F(1) is attached to F(0) by a central stalk formed by the gamma and epsilon chains, while a peripheral stalk is formed by the delta and b chains.

Its subcellular location is the cell inner membrane. F(1)F(0) ATP synthase produces ATP from ADP in the presence of a proton or sodium gradient. F-type ATPases consist of two structural domains, F(1) containing the extramembraneous catalytic core and F(0) containing the membrane proton channel, linked together by a central stalk and a peripheral stalk. During catalysis, ATP synthesis in the catalytic domain of F(1) is coupled via a rotary mechanism of the central stalk subunits to proton translocation. Its function is as follows. Component of the F(0) channel, it forms part of the peripheral stalk, linking F(1) to F(0). The b'-subunit is a diverged and duplicated form of b found in plants and photosynthetic bacteria. This chain is ATP synthase subunit b 2 (atpF2), found in Agrobacterium fabrum (strain C58 / ATCC 33970) (Agrobacterium tumefaciens (strain C58)).